The chain runs to 556 residues: Arginine--tRNA ligase (556 aa).

Residues 132-142 carry the 'HIGH' region motif; that stretch reads ANPTGSLHLGH.

This sequence belongs to the class-I aminoacyl-tRNA synthetase family. As to quaternary structure, monomer.

It is found in the cytoplasm. It catalyses the reaction tRNA(Arg) + L-arginine + ATP = L-arginyl-tRNA(Arg) + AMP + diphosphate. The polypeptide is Arginine--tRNA ligase (Anoxybacillus flavithermus (strain DSM 21510 / WK1)).